A 496-amino-acid polypeptide reads, in one-letter code: Fusarielin biosynthesis cluster transcription factor FSL7 (496 aa).

Residues 16-46 (CDRCHELKIRCTRTGGTESRCDRCEKNDIDC) constitute a DNA-binding region (zn(2)-C6 fungal-type). 5 disordered regions span residues 57–102 (PKSQ…SINS), 189–224 (RSIN…EDQM), 281–307 (ANHT…QSRS), 348–379 (GSTS…KPRT), and 444–470 (MTRE…AQAA). Composition is skewed to polar residues over residues 65–89 (GPNT…QEQM) and 207–218 (ELQSTQSASGSP). Residues 281 to 294 (ANHTSSSSSSNSTT) show a composition bias toward low complexity. Residues 355 to 379 (YNDTTAHPSSASLPSQTGGPTKPRT) show a composition bias toward polar residues. The span at 444 to 460 (MTREQHVSTGHGPDRHT) shows a compositional bias: basic and acidic residues.

The protein resides in the nucleus. Functionally, transcription regulator that specifically up-regulates the gene cluster that mediates the biosynthesis of fusarielins F, G and H, decaketide compounds with 5 methylations and a decaline core that act as mycoestrogens as they stimulate growth of MCF-7 breast cancer cells. Probably binds the 5'-CGGNNNCCG-3' motif present in the promoter of all the cluster genes. The chain is Fusarielin biosynthesis cluster transcription factor FSL7 from Gibberella zeae (strain ATCC MYA-4620 / CBS 123657 / FGSC 9075 / NRRL 31084 / PH-1) (Wheat head blight fungus).